Consider the following 95-residue polypeptide: Aspartyl/glutamyl-tRNA(Asn/Gln) amidotransferase subunit C (95 aa).

The protein belongs to the GatC family. Heterotrimer of A, B and C subunits.

It catalyses the reaction L-glutamyl-tRNA(Gln) + L-glutamine + ATP + H2O = L-glutaminyl-tRNA(Gln) + L-glutamate + ADP + phosphate + H(+). The catalysed reaction is L-aspartyl-tRNA(Asn) + L-glutamine + ATP + H2O = L-asparaginyl-tRNA(Asn) + L-glutamate + ADP + phosphate + 2 H(+). Its function is as follows. Allows the formation of correctly charged Asn-tRNA(Asn) or Gln-tRNA(Gln) through the transamidation of misacylated Asp-tRNA(Asn) or Glu-tRNA(Gln) in organisms which lack either or both of asparaginyl-tRNA or glutaminyl-tRNA synthetases. The reaction takes place in the presence of glutamine and ATP through an activated phospho-Asp-tRNA(Asn) or phospho-Glu-tRNA(Gln). The polypeptide is Aspartyl/glutamyl-tRNA(Asn/Gln) amidotransferase subunit C (Caldanaerobacter subterraneus subsp. tengcongensis (strain DSM 15242 / JCM 11007 / NBRC 100824 / MB4) (Thermoanaerobacter tengcongensis)).